Consider the following 62-residue polypeptide: Paralithocin 1 (62 aa).

The N-terminal stretch at 1–23 is a signal peptide; that stretch reads MGPMKVLLVLLVVMVAAPHIADA. Disulfide bonds link Cys29–Cys55, Cys33–Cys51, Cys37–Cys49, and Cys42–Cys52. Tyr61 is modified (tyrosine amide; partial).

This sequence belongs to the paralithocin family. Post-translationally, the amidated form is probably the active form.

Has weak antibacterial activity, mainly against marine Gram-positive bacteria like C.maltaromaticum (MIC=200 uM), C.mobile (MIC=100 uM), C.divergens (MIC=200 uM) and C.funditum (MIC=200 uM) but also against C.glutamicum (MIC=50 uM). Has very little or no activity against Gram-negative bacteria. This Paralithodes camtschaticus (Red king crab) protein is Paralithocin 1.